We begin with the raw amino-acid sequence, 428 residues long: Adenylosuccinate synthetase (428 aa).

Residues 12–18 (GDEGKGK) and 40–42 (GHT) each bind GTP. Asp-13 serves as the catalytic Proton acceptor. Residues Asp-13 and Gly-40 each contribute to the Mg(2+) site. Residues 13–16 (DEGK), 38–41 (NAGH), Thr-130, Arg-144, Gln-225, Thr-240, and Arg-304 each bind IMP. Residue His-41 is the Proton donor of the active site. 300–306 (VTTGRSR) provides a ligand contact to substrate. Residues Arg-306, 332–334 (KID), and 414–416 (GVG) contribute to the GTP site.

Belongs to the adenylosuccinate synthetase family. As to quaternary structure, homodimer. The cofactor is Mg(2+).

The protein resides in the cytoplasm. The enzyme catalyses IMP + L-aspartate + GTP = N(6)-(1,2-dicarboxyethyl)-AMP + GDP + phosphate + 2 H(+). It functions in the pathway purine metabolism; AMP biosynthesis via de novo pathway; AMP from IMP: step 1/2. Plays an important role in the de novo pathway of purine nucleotide biosynthesis. Catalyzes the first committed step in the biosynthesis of AMP from IMP. In Clostridium botulinum (strain Alaska E43 / Type E3), this protein is Adenylosuccinate synthetase.